The primary structure comprises 405 residues: L-rhamnonate dehydratase (405 aa).

His-33 and Arg-59 together coordinate substrate. The Mg(2+) site is built by Asp-226, Glu-252, and Glu-280. The active-site Proton acceptor is the His-329. Substrate is bound at residue Glu-349.

The protein belongs to the mandelate racemase/muconate lactonizing enzyme family. RhamD subfamily. In terms of assembly, homooctamer; tetramer of dimers. The cofactor is Mg(2+).

It carries out the reaction L-rhamnonate = 2-dehydro-3-deoxy-L-rhamnonate + H2O. Its function is as follows. Catalyzes the dehydration of L-rhamnonate to 2-keto-3-deoxy-L-rhamnonate (KDR). In Escherichia coli (strain K12 / DH10B), this protein is L-rhamnonate dehydratase.